Consider the following 219-residue polypeptide: tRNA (guanine-N(7)-)-methyltransferase (219 aa).

Residues E43, D68, E101, and N124 each contribute to the S-adenosyl-L-methionine site. The substrate site is built by K128 and D160.

This sequence belongs to the class I-like SAM-binding methyltransferase superfamily. TrmB family.

It carries out the reaction guanosine(46) in tRNA + S-adenosyl-L-methionine = N(7)-methylguanosine(46) in tRNA + S-adenosyl-L-homocysteine. It participates in tRNA modification; N(7)-methylguanine-tRNA biosynthesis. Its function is as follows. Catalyzes the formation of N(7)-methylguanine at position 46 (m7G46) in tRNA. The sequence is that of tRNA (guanine-N(7)-)-methyltransferase from Clostridium botulinum (strain Eklund 17B / Type B).